The chain runs to 306 residues: UDP-3-O-acyl-N-acetylglucosamine deacetylase (306 aa).

The Zn(2+) site is built by H79, H238, and D242. H265 (proton donor) is an active-site residue.

It belongs to the LpxC family. The cofactor is Zn(2+).

The enzyme catalyses a UDP-3-O-[(3R)-3-hydroxyacyl]-N-acetyl-alpha-D-glucosamine + H2O = a UDP-3-O-[(3R)-3-hydroxyacyl]-alpha-D-glucosamine + acetate. It participates in glycolipid biosynthesis; lipid IV(A) biosynthesis; lipid IV(A) from (3R)-3-hydroxytetradecanoyl-[acyl-carrier-protein] and UDP-N-acetyl-alpha-D-glucosamine: step 2/6. Catalyzes the hydrolysis of UDP-3-O-myristoyl-N-acetylglucosamine to form UDP-3-O-myristoylglucosamine and acetate, the committed step in lipid A biosynthesis. The protein is UDP-3-O-acyl-N-acetylglucosamine deacetylase of Shewanella loihica (strain ATCC BAA-1088 / PV-4).